The chain runs to 366 residues: Phospho-N-acetylmuramoyl-pentapeptide-transferase (366 aa).

Transmembrane regions (helical) follow at residues 3-23 (QIIIAGAVGLLVSIFVTPVLI), 52-72 (MGGIAILIGITVAYAVTGIVG), 80-100 (LTASGLLVLGLTLALGGLGFA), 120-140 (LIGQLAISLIFGALILLFPNA), 161-181 (LAIGPKAVGIAIFLLFIYILI), 197-217 (LAAGSTAIVMGTYTVITFWQF), 238-258 (LAILAAAGLGACLGFLWWNAA), 262-282 (IFMGDTGSLALGGLVAGLSVA), 287-307 (LLMIIVGALFVLEAASVVIQV), and 341-361 (FWLIAAVAALIGASIFYGEWL).

The protein belongs to the glycosyltransferase 4 family. MraY subfamily. The cofactor is Mg(2+).

Its subcellular location is the cell membrane. It carries out the reaction UDP-N-acetyl-alpha-D-muramoyl-L-alanyl-gamma-D-glutamyl-meso-2,6-diaminopimeloyl-D-alanyl-D-alanine + di-trans,octa-cis-undecaprenyl phosphate = di-trans,octa-cis-undecaprenyl diphospho-N-acetyl-alpha-D-muramoyl-L-alanyl-D-glutamyl-meso-2,6-diaminopimeloyl-D-alanyl-D-alanine + UMP. The protein operates within cell wall biogenesis; peptidoglycan biosynthesis. Its function is as follows. Catalyzes the initial step of the lipid cycle reactions in the biosynthesis of the cell wall peptidoglycan: transfers peptidoglycan precursor phospho-MurNAc-pentapeptide from UDP-MurNAc-pentapeptide onto the lipid carrier undecaprenyl phosphate, yielding undecaprenyl-pyrophosphoryl-MurNAc-pentapeptide, known as lipid I. In Corynebacterium diphtheriae (strain ATCC 700971 / NCTC 13129 / Biotype gravis), this protein is Phospho-N-acetylmuramoyl-pentapeptide-transferase.